A 248-amino-acid chain; its full sequence is 2,3-bisphosphoglycerate-dependent phosphoglycerate mutase (248 aa).

Substrate contacts are provided by residues 9–16, 22–23, R61, 88–91, K99, 115–116, and 183–184; these read RHGHSEWN, TG, ERHY, RR, and GN. Residue H10 is the Tele-phosphohistidine intermediate of the active site. The active-site Proton donor/acceptor is E88.

This sequence belongs to the phosphoglycerate mutase family. BPG-dependent PGAM subfamily.

It carries out the reaction (2R)-2-phosphoglycerate = (2R)-3-phosphoglycerate. Its pathway is carbohydrate degradation; glycolysis; pyruvate from D-glyceraldehyde 3-phosphate: step 3/5. Catalyzes the interconversion of 2-phosphoglycerate and 3-phosphoglycerate. This is 2,3-bisphosphoglycerate-dependent phosphoglycerate mutase from Arthrobacter sp. (strain FB24).